A 303-amino-acid polypeptide reads, in one-letter code: tRNA dimethylallyltransferase (303 aa).

12-19 (GTTASGKS) lines the ATP pocket. 14 to 19 (TASGKS) contributes to the substrate binding site. The interval 37 to 40 (DSRQ) is interaction with substrate tRNA.

It belongs to the IPP transferase family. In terms of assembly, monomer. The cofactor is Mg(2+).

It carries out the reaction adenosine(37) in tRNA + dimethylallyl diphosphate = N(6)-dimethylallyladenosine(37) in tRNA + diphosphate. Catalyzes the transfer of a dimethylallyl group onto the adenine at position 37 in tRNAs that read codons beginning with uridine, leading to the formation of N6-(dimethylallyl)adenosine (i(6)A). This chain is tRNA dimethylallyltransferase, found in Synechocystis sp. (strain ATCC 27184 / PCC 6803 / Kazusa).